A 274-amino-acid chain; its full sequence is 2,3,4,5-tetrahydropyridine-2,6-dicarboxylate N-succinyltransferase (274 aa).

2 residues coordinate substrate: Arg-105 and Asp-142.

This sequence belongs to the transferase hexapeptide repeat family. As to quaternary structure, homotrimer.

Its subcellular location is the cytoplasm. The catalysed reaction is (S)-2,3,4,5-tetrahydrodipicolinate + succinyl-CoA + H2O = (S)-2-succinylamino-6-oxoheptanedioate + CoA. It functions in the pathway amino-acid biosynthesis; L-lysine biosynthesis via DAP pathway; LL-2,6-diaminopimelate from (S)-tetrahydrodipicolinate (succinylase route): step 1/3. This Methylobacillus flagellatus (strain ATCC 51484 / DSM 6875 / VKM B-1610 / KT) protein is 2,3,4,5-tetrahydropyridine-2,6-dicarboxylate N-succinyltransferase.